The following is a 196-amino-acid chain: Probable malonic semialdehyde reductase RutE (196 aa).

The protein belongs to the nitroreductase family. HadB/RutE subfamily. FMN is required as a cofactor.

It carries out the reaction 3-hydroxypropanoate + NADP(+) = 3-oxopropanoate + NADPH + H(+). In terms of biological role, may reduce toxic product malonic semialdehyde to 3-hydroxypropionic acid, which is excreted. This is Probable malonic semialdehyde reductase RutE from Escherichia coli (strain K12 / MC4100 / BW2952).